A 183-amino-acid chain; its full sequence is Adenine phosphoribosyltransferase (183 aa).

This sequence belongs to the purine/pyrimidine phosphoribosyltransferase family. As to quaternary structure, homodimer.

It is found in the cytoplasm. The catalysed reaction is AMP + diphosphate = 5-phospho-alpha-D-ribose 1-diphosphate + adenine. It participates in purine metabolism; AMP biosynthesis via salvage pathway; AMP from adenine: step 1/1. Its function is as follows. Catalyzes a salvage reaction resulting in the formation of AMP, that is energically less costly than de novo synthesis. This chain is Adenine phosphoribosyltransferase, found in Salmonella typhi.